Consider the following 277-residue polypeptide: Large ribosomal subunit protein uL2 (277 aa).

Positions 223-277 (VAMNPVDHPHGGGEGRTSTGRHPVTPWGKRTLGKKTRKRKASDKYIIRSRRARKR) are disordered. Residues 253 to 277 (TLGKKTRKRKASDKYIIRSRRARKR) show a composition bias toward basic residues.

The protein belongs to the universal ribosomal protein uL2 family. In terms of assembly, part of the 50S ribosomal subunit. Forms a bridge to the 30S subunit in the 70S ribosome.

In terms of biological role, one of the primary rRNA binding proteins. Required for association of the 30S and 50S subunits to form the 70S ribosome, for tRNA binding and peptide bond formation. It has been suggested to have peptidyltransferase activity; this is somewhat controversial. Makes several contacts with the 16S rRNA in the 70S ribosome. The polypeptide is Large ribosomal subunit protein uL2 (Halothermothrix orenii (strain H 168 / OCM 544 / DSM 9562)).